Reading from the N-terminus, the 281-residue chain is Small ribosomal subunit protein uS2 (281 aa).

It belongs to the universal ribosomal protein uS2 family.

The polypeptide is Small ribosomal subunit protein uS2 (rpsB) (Chlamydia muridarum (strain MoPn / Nigg)).